A 706-amino-acid polypeptide reads, in one-letter code: Cyclic nucleotide-gated ion channel 18 (706 aa).

The Cytoplasmic portion of the chain corresponds to 1 to 53 (MNKIRSLRCLLPETITSASTAASNRGSDGSQFSVLWRHQILDPDSNIVTYWNH). A helical transmembrane segment spans residues 54 to 74 (VFLITSILALFLDPFYFYVPY). At 75–86 (VGGPACLSIDIS) the chain is on the extracellular side. A helical membrane pass occupies residues 87–107 (LAATVTFFRTVADIFHLLHIF). Topologically, residues 108–142 (MKFRTAFVARSSRVFGRGELVMDSREIAMRYLKTD) are cytoplasmic. The helical transmembrane segment at 143–163 (FLIDVAAMLPLPQLVIWLVIP) threads the bilayer. The Extracellular portion of the chain corresponds to 164-174 (AATNGTANHAN). The chain crosses the membrane as a helical span at residues 175–195 (STLALIVLVQYIPRSFIIFPL). Residues 196–217 (NQRIIKTTGFIAKTAWAGAAYN) are Cytoplasmic-facing. Residues 218-238 (LLLYILASHVLGAMWYLSSIG) form a helical membrane-spanning segment. Over 239-345 (RQFSCWSNVC…ITTSVYLGET (107 aa)) the chain is Extracellular. A helical membrane pass occupies residues 346–366 (LFCITICIFGLILFTLLIGNM). Topologically, residues 367–706 (QSSLQSMSVR…PDFSIDKEDV (340 aa)) are cytoplasmic. Residues 449–579 (FFSQ…AFRY) and Glu-520 contribute to the a nucleoside 3',5'-cyclic phosphate site. The calmodulin-binding stretch occupies residues 565–580 (FKRLQSKKLQHAFRYY). Residues 585 to 614 (RAWGACFVQSAWRRYKRRKLAKELSLHESS) enclose the IQ domain. A disordered region spans residues 661-706 (ANTRRGTNQKASSSSTGKKDGSSTSLKMPQLFKPDEPDFSIDKEDV). Residues 693 to 706 (KPDEPDFSIDKEDV) are compositionally biased toward basic and acidic residues.

It belongs to the cyclic nucleotide-gated cation channel (TC 1.A.1.5) family. Homomultimer. Interacts with CPK32. In terms of tissue distribution, expressed in pollen grains. Not detected in leaves, roots or root hairs.

The protein localises to the cell membrane. Its subcellular location is the cytoplasmic vesicle membrane. Its function is as follows. Cyclic nucleotide-gated ion channel required for directional pollen tube growth into the transmitting tract. Acts as a Ca(2+)-permeable divalent cation-selective channel inhibited by either lanthanum or gadolinium. Regulated by CPK32 to mediate Ca(2+) transport across the plasma membrane in response to Ca(2+) oscillation. This chain is Cyclic nucleotide-gated ion channel 18, found in Arabidopsis thaliana (Mouse-ear cress).